A 365-amino-acid polypeptide reads, in one-letter code: Protein BZR1 homolog 2 (365 aa).

The span at 1-30 (MATGGGGGGGGMGGGGVGGGAGAAGVGVGG) shows a compositional bias: gly residues. 4 disordered regions span residues 1 to 45 (MATG…KRRE), 113 to 154 (SPSP…NMAN), 191 to 236 (SAPV…TPPS), and 344 to 365 (HEDS…RAAA). The interval 31 to 113 (RMPTWREREN…RMEVIGCSVS (83 aa)) is required for DNA-binding. A compositionally biased stretch (low complexity) spans 113–144 (SPSPCSSYQPSPRASYNASPTSSSFPSGASSP). Polar residues-rich tracts occupy residues 215-233 (SNVQ…VNST) and 356-365 (LGSSRTRAAA).

It belongs to the BZR/LAT61 family. In terms of assembly, interacts with PUB24.

Its function is as follows. May function in brassinosteroid signaling. In Oryza sativa subsp. japonica (Rice), this protein is Protein BZR1 homolog 2.